An 850-amino-acid polypeptide reads, in one-letter code: Coiled-coil and C2 domain-containing protein 1B (850 aa).

Residues 1-10 (MPGPRPRKGP) are compositionally biased toward basic residues. 3 disordered regions span residues 1 to 21 (MPGP…ETAK), 54 to 73 (LTGE…RAPL), and 114 to 145 (GVDE…EQPV). A compositionally biased stretch (acidic residues) spans 114–129 (GVDEETGLVDDSEETS). A coiled-coil region spans residues 167 to 213 (LQALLEERIQNYREAAASAKEAGEAAKARRCERGLKTLESQLATVRK). 2 disordered regions span residues 215-277 (GKIC…SDPD) and 436-525 (FAEL…SPSV). Over residues 234–244 (AHQERPSKDSE) the composition is skewed to basic and acidic residues. Over residues 440–450 (PVPPGFPPIPG) the composition is skewed to pro residues. 2 stretches are compositionally biased toward low complexity: residues 489 to 502 (PAQA…AQPL) and 511 to 524 (EPKA…LSPS). S585 bears the Phosphoserine mark. T588 bears the Phosphothreonine mark. Positions 668–807 (DPPSHHFELK…EKECEIREIM (140 aa)) constitute a C2 domain.

Interacts with CHMP4B. Expressed in epididymal sperm but not in testicular sperm (at protein level).

It is found in the nucleus. Functionally, transcription factor that binds specifically to the DRE (dual repressor element) and represses HTR1A gene transcription in neuronal cells. The protein is Coiled-coil and C2 domain-containing protein 1B (Cc2d1b) of Rattus norvegicus (Rat).